The sequence spans 497 residues: Carboxylesterase (497 aa).

Residue Ser185 is the Acyl-ester intermediate of the active site. Residues Glu319 and His415 each act as charge relay system in the active site.

The protein belongs to the type-B carboxylesterase/lipase family.

The protein localises to the secreted. The enzyme catalyses a carboxylic ester + H2O = an alcohol + a carboxylate + H(+). This chain is Carboxylesterase, found in Thermobifida fusca (Thermomonospora fusca).